A 453-amino-acid chain; its full sequence is Regulatory protein opaque-2 (453 aa).

The disordered stretch occupies residues 145–243; that stretch reads SSVVTSDQRS…SNRESARRSR (99 aa). The span at 146–175 shows a compositional bias: polar residues; it reads SVVTSDQRSQGSNNHTGGSSIRNNPVQNKL. Residues 207 to 216 are compositionally biased toward acidic residues; it reads PSDEDMDGEV. Residues 224-240 are compositionally biased toward basic and acidic residues; sequence PTEERVRKKESNRESAR. The bZIP domain maps to 225 to 288; sequence TEERVRKKES…NDANVDNRVL (64 aa). The tract at residues 228 to 251 is basic motif; sequence RVRKKESNRESARRSRYRKAAHLK. Positions 253-274 are leucine-zipper; the sequence is LEDQVAQLKAENSCLLRRIAAL.

The protein belongs to the bZIP family. Interacts with the Dof zinc finger protein PBF. In terms of tissue distribution, seed endosperm.

It is found in the nucleus. Involved in the regulation of the endosperm-specific production of albumin b-32 and other zein proteins. It is a trans-acting transcriptional activator that binds to the consensus sequence 5'-GATGAYRTGR-3'. The protein is Regulatory protein opaque-2 (O2) of Zea mays (Maize).